A 460-amino-acid polypeptide reads, in one-letter code: Serine/threonine-protein kinase cds1 (460 aa).

The region spanning 60–116 (WRFGRHKSCEVVLNGPRVSNFHFEIYQGHRNDSDESENVVFLHDHSSNGTFLNFERL) is the FHA domain. The 267-residue stretch at 167–433 (YEIIRTLGSG…ESEALQHPWF (267 aa)) folds into the Protein kinase domain. ATP is bound by residues 173–181 (LGSGTFAVV) and lysine 196. The active-site Proton acceptor is aspartate 294. Positions 438-453 (THEHRTPPSSSEHEAT) are enriched in basic and acidic residues. Residues 438-460 (THEHRTPPSSSEHEATEQLNSSS) are disordered. At threonine 443 the chain carries Phosphothreonine.

This sequence belongs to the protein kinase superfamily. CAMK Ser/Thr protein kinase family. CHEK2 subfamily. In terms of assembly, interacts with rad26. Post-translationally, autophosphorylated.

It carries out the reaction L-seryl-[protein] + ATP = O-phospho-L-seryl-[protein] + ADP + H(+). It catalyses the reaction L-threonyl-[protein] + ATP = O-phospho-L-threonyl-[protein] + ADP + H(+). Functionally, has a role in the DNA replication-monitoring S/G2 checkpoint system. It is responsible for blocking mitosis in the S phase. It monitors DNA synthesis by interacting with DNA polymerase alpha and sends a signal to block the onset of mitosis while DNA synthesis is in progress. Phosphorylates rad60 and dna2. The chain is Serine/threonine-protein kinase cds1 (cds1) from Schizosaccharomyces pombe (strain 972 / ATCC 24843) (Fission yeast).